Here is a 125-residue protein sequence, read N- to C-terminus: Transposase for transposon Tn554 (125 aa).

Functionally, one of three proteins encoded by transposon Tn554 required for its transposition. The protein is Transposase for transposon Tn554 (tnpC1) of Staphylococcus aureus (strain Mu50 / ATCC 700699).